Reading from the N-terminus, the 177-residue chain is ATP synthase subunit delta (177 aa).

Belongs to the ATPase delta chain family. As to quaternary structure, F-type ATPases have 2 components, F(1) - the catalytic core - and F(0) - the membrane proton channel. F(1) has five subunits: alpha(3), beta(3), gamma(1), delta(1), epsilon(1). F(0) has three main subunits: a(1), b(2) and c(10-14). The alpha and beta chains form an alternating ring which encloses part of the gamma chain. F(1) is attached to F(0) by a central stalk formed by the gamma and epsilon chains, while a peripheral stalk is formed by the delta and b chains.

The protein localises to the cell inner membrane. Its function is as follows. F(1)F(0) ATP synthase produces ATP from ADP in the presence of a proton or sodium gradient. F-type ATPases consist of two structural domains, F(1) containing the extramembraneous catalytic core and F(0) containing the membrane proton channel, linked together by a central stalk and a peripheral stalk. During catalysis, ATP synthesis in the catalytic domain of F(1) is coupled via a rotary mechanism of the central stalk subunits to proton translocation. Functionally, this protein is part of the stalk that links CF(0) to CF(1). It either transmits conformational changes from CF(0) to CF(1) or is implicated in proton conduction. The protein is ATP synthase subunit delta of Aliivibrio fischeri (strain MJ11) (Vibrio fischeri).